A 181-amino-acid chain; its full sequence is Ribose 1,5-bisphosphate phosphokinase PhnN (181 aa).

Residue Gly12–Asp19 coordinates ATP.

Belongs to the ribose 1,5-bisphosphokinase family.

The catalysed reaction is alpha-D-ribose 1,5-bisphosphate + ATP = 5-phospho-alpha-D-ribose 1-diphosphate + ADP. It participates in metabolic intermediate biosynthesis; 5-phospho-alpha-D-ribose 1-diphosphate biosynthesis; 5-phospho-alpha-D-ribose 1-diphosphate from D-ribose 5-phosphate (route II): step 3/3. Functionally, catalyzes the phosphorylation of ribose 1,5-bisphosphate to 5-phospho-D-ribosyl alpha-1-diphosphate (PRPP). The polypeptide is Ribose 1,5-bisphosphate phosphokinase PhnN (Acidiphilium cryptum (strain JF-5)).